Reading from the N-terminus, the 201-residue chain is Recombination protein RecR (201 aa).

Residues C60–C75 form a C4-type zinc finger. In terms of domain architecture, Toprim spans T83–P178.

It belongs to the RecR family.

Functionally, may play a role in DNA repair. It seems to be involved in an RecBC-independent recombinational process of DNA repair. It may act with RecF and RecO. This is Recombination protein RecR from Methylorubrum extorquens (strain CM4 / NCIMB 13688) (Methylobacterium extorquens).